Here is a 139-residue protein sequence, read N- to C-terminus: Endoribonuclease YbeY (139 aa).

Zn(2+)-binding residues include His107, His111, and Asp117.

The protein belongs to the endoribonuclease YbeY family. The cofactor is Zn(2+).

Its subcellular location is the cytoplasm. Single strand-specific metallo-endoribonuclease involved in late-stage 70S ribosome quality control and in maturation of the 3' terminus of the 16S rRNA. The sequence is that of Endoribonuclease YbeY from Bacteroides fragilis (strain ATCC 25285 / DSM 2151 / CCUG 4856 / JCM 11019 / LMG 10263 / NCTC 9343 / Onslow / VPI 2553 / EN-2).